The following is a 569-amino-acid chain: Sulfite reductase [NADPH] hemoprotein beta-component (569 aa).

4 residues coordinate [4Fe-4S] cluster: Cys-433, Cys-439, Cys-478, and Cys-482. A siroheme-binding site is contributed by Cys-482.

This sequence belongs to the nitrite and sulfite reductase 4Fe-4S domain family. In terms of assembly, alpha(8)-beta(8). The alpha component is a flavoprotein, the beta component is a hemoprotein. Siroheme is required as a cofactor. It depends on [4Fe-4S] cluster as a cofactor.

The catalysed reaction is hydrogen sulfide + 3 NADP(+) + 3 H2O = sulfite + 3 NADPH + 4 H(+). Its pathway is sulfur metabolism; hydrogen sulfide biosynthesis; hydrogen sulfide from sulfite (NADPH route): step 1/1. Component of the sulfite reductase complex that catalyzes the 6-electron reduction of sulfite to sulfide. This is one of several activities required for the biosynthesis of L-cysteine from sulfate. This is Sulfite reductase [NADPH] hemoprotein beta-component from Pseudoalteromonas atlantica (strain T6c / ATCC BAA-1087).